Reading from the N-terminus, the 295-residue chain is Tyrosine recombinase XerD (295 aa).

Residues Met1–Leu85 enclose the Core-binding (CB) domain. The 184-residue stretch at Lys106–Thr289 folds into the Tyr recombinase domain. Catalysis depends on residues Arg146, Lys170, His241, Arg244, and His267. Residue Tyr276 is the O-(3'-phospho-DNA)-tyrosine intermediate of the active site.

It belongs to the 'phage' integrase family. XerD subfamily. Forms a cyclic heterotetrameric complex composed of two molecules of XerC and two molecules of XerD.

It is found in the cytoplasm. In terms of biological role, site-specific tyrosine recombinase, which acts by catalyzing the cutting and rejoining of the recombining DNA molecules. The XerC-XerD complex is essential to convert dimers of the bacterial chromosome into monomers to permit their segregation at cell division. It also contributes to the segregational stability of plasmids. This Staphylococcus epidermidis (strain ATCC 35984 / DSM 28319 / BCRC 17069 / CCUG 31568 / BM 3577 / RP62A) protein is Tyrosine recombinase XerD.